The following is a 79-amino-acid chain: Small ribosomal subunit protein bS18B (79 aa).

It belongs to the bacterial ribosomal protein bS18 family. Part of the 30S ribosomal subunit. Forms a tight heterodimer with protein bS6.

Functionally, binds as a heterodimer with protein bS6 to the central domain of the 16S rRNA, where it helps stabilize the platform of the 30S subunit. The chain is Small ribosomal subunit protein bS18B from Saccharopolyspora erythraea (strain ATCC 11635 / DSM 40517 / JCM 4748 / NBRC 13426 / NCIMB 8594 / NRRL 2338).